A 231-amino-acid polypeptide reads, in one-letter code: 26S proteasome non-ATPase regulatory subunit 10 (231 aa).

ANK repeat units lie at residues 3–36 (GCVS…ATRT), 37–69 (DQDS…VNDK), 70–102 (DDAG…VNAV), 103–135 (NQNG…PDAK), 136–168 (DHYD…TNIQ), 169–201 (DTEG…IYIE), and 202–226 (NKEE…LAES).

Part of transient complex containing PSMD10, PSMC4, PSMC5 and PAAF1 formed during the assembly of the 26S proteasome. Stays associated throughout the assembly of the PA700/19S RC and is released upon association with the 20S core. Interacts with PSMC4. Interacts with RB1. Interacts with CDK4. Interacts with MDM2. Interacts with RELA. Associates with a CDK4:CCND2 serine/threonine kinase complex. Interacts with ARHGDIA and increases the interaction between ARHGDIA and RHOA, hence promotes ARHGDIA inactivation of RHOA and ROCK.

The protein resides in the cytoplasm. It localises to the nucleus. In terms of biological role, acts as a chaperone during the assembly of the 26S proteasome, specifically of the PA700/19S regulatory complex (RC). In the initial step of the base subcomplex assembly is part of an intermediate PSMD10:PSMC4:PSMC5:PAAF1 module which probably assembles with a PSMD5:PSMC2:PSMC1:PSMD2 module. Independently of the proteasome, regulates EGF-induced AKT activation through inhibition of the RHOA/ROCK/PTEN pathway, leading to prolonged AKT activation. Plays an important role in RAS-induced tumorigenesis. Functionally, acts as an oncoprotein by being involved in negative regulation of tumor suppressors RB1 and p53/TP53. Overexpression is leading to phosphorylation of RB1 and proteasomal degradation of RB1. Regulates CDK4-mediated phosphorylation of RB1 by competing with CDKN2A for binding with CDK4. Facilitates binding of MDM2 to p53/TP53 and the mono- and polyubiquitination of p53/TP53 by MDM2 suggesting a function in targeting the TP53:MDM2 complex to the 26S proteasome. Involved in p53-independent apoptosis. Involved in regulation of NF-kappa-B by retaining it in the cytoplasm. Binds to the NF-kappa-B component RELA and accelerates its XPO1/CRM1-mediated nuclear export. The polypeptide is 26S proteasome non-ATPase regulatory subunit 10 (Psmd10) (Mus musculus (Mouse)).